The primary structure comprises 2587 residues: MAAFLVMFIFTIALFVALLWVFFKSLPWILRHSAGITLSFQFDGWNCLKDVALQFKKGSIESIVIGEFKANLSQSLVELCATAFIQDPKVIFSICDLKIVTRPSHSSKGPRKPKTRKSSSGGKGKLMLFANIGRFFSVSMTNMVVQTPKATAEIKELELDLSKDRGSGNFFMKLYLLPIFVQIGEPHVTSTHSPEMDSDICLARQTPSKTAEGSSSSSFHCEKISLSCEFGPNRKSSPSIKNVEVDLANAVLNLNEKLLLKNKSSTSAASKGEVIDSSSGNTTSEKPPKQPMNVLVAKHASKFPEKVLFDLTKLEIRFVHQEHDFSIANSIKGFQLRSAKSQSGEDGKEDTCLDFAMELQEMHLFRESEVSVLEMTKFGVFTKVYCPIQESLPVRAEVEIKLGGIMSNIIMTRFEPLLRLHFSRKKKMVLKEERPTIAKSETTGFKAVVWKCATSAPDVTVVLYNPGGSPIYQCGLDSFQATANNMSNRGTVVQMELNELTLCMVDEHKGCLKESLFGLESDPGSLINIRKVRSEWGKKEVLPEGDGSKGKQTLVVDVSEIGLLFSFRSVEALTVNAISSQAYIKSLTGSSSKNKQEKGAHRSKPPSGRGTQLLKLNVERFSLNFAGDSSLENTVIDDPKRVNYGSQGGRIIISVSADGSPRTASVFSTLSEEHEKLKYIISFEILKFGFTLNKEIQSTQVELETAKAIYQEFLEEPHQVSRVTLCDIQNAKFVRRIGGGKEVSICSLFSASNIAVRWEPDVHISMVELGLRLKSLVLTQKLKQHGNRNPEEASTVTGDKQKEEPTTTPNSLDKKKKKESIFAVDVEMLSITAEAGDGVEAEVQIQSIFSENVGIGVLLEGFMLGFCGCRIVKSSRVQISRIPSMPSTSSSVTPATGGTPWDWIVQGVDIHICMPFRLQLRAIDDAVEEMLRALKLVTNAKTKLIFPIKKESSTPKKPGSKKVGRIRFGIRKLIFDIEEEPLQGWLDEHYHLMRKEAYELAIRSKFLDELMSSGNQVPKTGGDESDGEKKISFEGEEIDPQDPAIIQMMNEKLYKQSFSSYYKSCQSLRLSDGSGACKEGFQAGFKMSTSRTSLLSVSVTDLDLSLTAIGGGEAGMIEIVKKLDPVAEEKDIPFSRLYGSNLRLNTGTLAVQIRNYTFPLLSTAFGKCEGCLVLAQQATAFQPQIIHDVYIGRWRKVQMLRSASGTTPAMKTYLDLPIKFQKGEISFGIGYEPVLADISYAFTVALRRANLSLKGPGLLQPPKKEKSLPWWDEMRNYVHGNVTLSFSETKWIVLGSPDPYEKLDKLHMTSGSVEIQQYDGRVHFSAEDIKIFFSSFEGLARHYPNSPVCPSSYPFLEVPRFSLEVRMDWECESGSPLNHYLFALPIEGKARDKIYDPFRSTSLSLRWDFTLRPENPSVSAVDQTKKVGSECKPEKSSFSPPTINIGAHDLAWLIRFWNMNYLPPYKLRTFSRWPRFGVPRIPRSGNLSLDRVMTEYNLRLDVTPICIKHMTLDSNNPAKGLTFDMTKLKYEICFSRGNQDFTFECKRETLDPVYQGIDLHLPKAFLRRDQHCSKPAQMSRTSSLSGSTDRVTSDNGTSTSDGTEKHPDDGFLFSSDYFTIRRQAPKADPERLMVWKEEGKIYREKVDARSTKEKQSEPEENSHSDPSDDDGYNVVIADNCQRIFVYGLKLLWNIENRDAVLSFAGGMSKAFQPPKPSPSRQYAQRKLLEGNQKHSESEVSQDEPTKQPSTGSGNLASQSKEPAEVLSPSSEPIKTENFASFPLGATKTGDSNDPEEEGTRHFMVNVVEPQFNLHSEDINGRFLLAAASGRVLARSFHSVVHVAYDMIEKAAQNENDHNPENGTDMTWTRMEVSMMLEHVQAHVAPTDVDPGAGVQWLPKIRRSSPKAKRTGALLERVFMPCDMYFQYTRHKGVTPDLKVKPLKELTFNSRNITASMTSRQFQVMTDVLSNLLFARLPKAHNDSLKLSGEEDDEVEEEIDEVVPDGIEEVELAKIELEAKERDRMMLLDDIRKLTQNESNSGNINLEKESDFWMISGGRPVLVERLRKAYLSVQQSRKTAYTALRTSVKNAAELRLLEKDKNKRPSSAMRISLQINKVIWSMVLDGKTFAEVEIDNMIYDFNRDYRDIGIAQFTTRYVVLRNCLPNAKCDTVLSAWNPPPEWGKKVMLQVDARQGAPKDGQAPYELFQVEIYPLKIHLTETMYTMMWEYIFPGEEQHSQRREEVWKVSTTSGSRRRKGSFAQEAAALLAASDLGQGSKNQSLKSSTIRGSGRELRRTSSFDRSWEETVAESVATELVLSSMEHQGESSKGKLKDSKTSKAGGRSVHEEKKGEKSLEDKKSRPQKIMQFQTIKISQVELLITYEGSRFVVNDMKLCMDTFHRVEFSGTWRRLFSRVKKHIIWGVLKSVTGMQMKKFKDKAHVPKDDIGLRDKDESGRTDQESGAWVKRPGDNAGDGFVTSIRGIFNTQRRKAKKFVLRTMRGEAEDNFPGEWSDNESDFSPFARQLTITKAKKLIRRHSKKFQNQNTTKGSKKTQLSPTLSPPKEEDQYESDSSSGSSAYEEFLDQNQI.

The signal sequence occupies residues 1-27 (MAAFLVMFIFTIALFVALLWVFFKSLP). Asparagine 71 carries an N-linked (GlcNAc...) asparagine glycan. A disordered region spans residues 103 to 124 (PSHSSKGPRKPKTRKSSSGGKG). Positions 108–117 (KGPRKPKTRK) are enriched in basic residues. Asparagine 262, asparagine 281, and asparagine 485 each carry an N-linked (GlcNAc...) asparagine glycan. The interval 270 to 290 (SKGEVIDSSSGNTTSEKPPKQ) is disordered. The span at 276-285 (DSSSGNTTSE) shows a compositional bias: polar residues. Positions 589 to 611 (GSSSKNKQEKGAHRSKPPSGRGT) are disordered. Positions 691-716 (TLNKEIQSTQVELETAKAIYQEFLEE) form a coiled coil. The tract at residues 784–814 (QHGNRNPEEASTVTGDKQKEEPTTTPNSLDK) is disordered. N-linked (GlcNAc...) asparagine glycans are attached at residues asparagine 1155, asparagine 1250, asparagine 1281, and asparagine 1486. 3 disordered regions span residues 1571–1608 (HCSKPAQMSRTSSLSGSTDRVTSDNGTSTSDGTEKHPD), 1646–1673 (VDARSTKEKQSEPEENSHSDPSDDDGYN), and 1729–1797 (EGNQ…PEEE). The segment covering 1576-1590 (AQMSRTSSLSGSTDR) has biased composition (polar residues). A glycan (N-linked (GlcNAc...) asparagine) is linked at asparagine 1595. Positions 1646-1666 (VDARSTKEKQSEPEENSHSDP) are enriched in basic and acidic residues. Polar residues predominate over residues 1746-1760 (KQPSTGSGNLASQSK). N-linked (GlcNAc...) asparagine glycosylation is found at asparagine 1861, asparagine 1951, asparagine 1981, asparagine 2036, and asparagine 2278. Residues 2006-2036 (IEEVELAKIELEAKERDRMMLLDDIRKLTQN) adopt a coiled-coil conformation. The span at 2274-2287 (QGSKNQSLKSSTIR) shows a compositional bias: polar residues. 3 disordered regions span residues 2274-2299 (QGSKNQSLKSSTIRGSGRELRRTSSF), 2319-2360 (SMEH…KKSR), and 2442-2469 (KDDIGLRDKDESGRTDQESGAWVKRPGD). 4 stretches are compositionally biased toward basic and acidic residues: residues 2289–2299 (SGRELRRTSSF), 2322–2336 (HQGESSKGKLKDSKT), 2343–2359 (SVHEEKKGEKSLEDKKS), and 2442–2458 (KDDIGLRDKDESGRTDQ). Residues asparagine 2513 and asparagine 2544 are each glycosylated (N-linked (GlcNAc...) asparagine). The tract at residues 2533–2587 (IRRHSKKFQNQNTTKGSKKTQLSPTLSPPKEEDQYESDSSSGSSAYEEFLDQNQI) is disordered. The segment covering 2540–2557 (FQNQNTTKGSKKTQLSPT) has biased composition (polar residues). Positions 2569 to 2579 (SDSSSGSSAYE) are enriched in low complexity.

It belongs to the SABRE family. In terms of tissue distribution, mostly expressed in pollen and roots, especially in tip-growing cells, but also present in seedlings, stems, leaves, buds, flowers, siliques and seeds.

The protein resides in the secreted. It is found in the golgi apparatus. Its function is as follows. May be involved in membrane trafficking. Required for tip growth in pollen tubes and root hairs. The protein is Protein KINKY POLLEN of Arabidopsis thaliana (Mouse-ear cress).